Here is a 300-residue protein sequence, read N- to C-terminus: Ribosomal protein L11 methyltransferase (300 aa).

Residues Thr-148, Gly-171, Asp-193, and Asn-235 each contribute to the S-adenosyl-L-methionine site.

It belongs to the methyltransferase superfamily. PrmA family.

It is found in the cytoplasm. The catalysed reaction is L-lysyl-[protein] + 3 S-adenosyl-L-methionine = N(6),N(6),N(6)-trimethyl-L-lysyl-[protein] + 3 S-adenosyl-L-homocysteine + 3 H(+). Functionally, methylates ribosomal protein L11. In Desulfotalea psychrophila (strain LSv54 / DSM 12343), this protein is Ribosomal protein L11 methyltransferase.